Here is a 122-residue protein sequence, read N- to C-terminus: Large ribosomal subunit protein uL14c (122 aa).

This sequence belongs to the universal ribosomal protein uL14 family. As to quaternary structure, part of the 50S ribosomal subunit.

It localises to the plastid. Its subcellular location is the chloroplast. Binds to 23S rRNA. The polypeptide is Large ribosomal subunit protein uL14c (Platanus occidentalis (Sycamore)).